The primary structure comprises 419 residues: Ribosome biogenesis protein WDR12 homolog (419 aa).

Residues 10–91 (VQVHLKTKQE…EDAIEIEYVE (82 aa)) form a ubiquitin-like (UBL) domain region. WD repeat units lie at residues 103–141 (LHDD…LTIP), 142–184 (GHTA…NTVE), 191–230 (GHER…AGEG), 249–287 (GHRE…IKAE), 289–328 (STNK…GSVV), 334–374 (GHNA…APLY), and 378–416 (GHGE…VENM).

This sequence belongs to the WD repeat WDR12/YTM1 family.

It localises to the nucleus. The protein resides in the nucleolus. The protein localises to the nucleoplasm. Its function is as follows. Required for maturation of ribosomal RNAs and formation of the large ribosomal subunit. This chain is Ribosome biogenesis protein WDR12 homolog, found in Drosophila pseudoobscura pseudoobscura (Fruit fly).